Reading from the N-terminus, the 461-residue chain is tRNA modification GTPase MnmE (461 aa).

Residues lysine 32, glutamate 89, and lysine 128 each contribute to the (6S)-5-formyl-5,6,7,8-tetrahydrofolate site. One can recognise a TrmE-type G domain in the interval 224 to 387 (GHALSIVGKP…LSQKISAFFP (164 aa)). Asparagine 234 is a K(+) binding site. GTP-binding positions include 234–239 (NAGKSS), 253–259 (SDIKGTT), and 278–281 (DTAG). A Mg(2+)-binding site is contributed by serine 238. Residues serine 253, isoleucine 255, and threonine 258 each coordinate K(+). A Mg(2+)-binding site is contributed by threonine 259. Lysine 461 contributes to the (6S)-5-formyl-5,6,7,8-tetrahydrofolate binding site.

It belongs to the TRAFAC class TrmE-Era-EngA-EngB-Septin-like GTPase superfamily. TrmE GTPase family. In terms of assembly, homodimer. Heterotetramer of two MnmE and two MnmG subunits. K(+) serves as cofactor.

It localises to the cytoplasm. Exhibits a very high intrinsic GTPase hydrolysis rate. Involved in the addition of a carboxymethylaminomethyl (cmnm) group at the wobble position (U34) of certain tRNAs, forming tRNA-cmnm(5)s(2)U34. The chain is tRNA modification GTPase MnmE from Helicobacter pylori (strain ATCC 700392 / 26695) (Campylobacter pylori).